The primary structure comprises 153 residues: Ribonuclease H (153 aa).

The RNase H type-1 domain maps to 1 to 142 (MLKTIKIFSD…CDHLARESAK (142 aa)). Mg(2+) contacts are provided by Asp-10, Glu-48, Asp-70, and Asp-134.

It belongs to the RNase H family. Monomer. Mg(2+) serves as cofactor.

It is found in the cytoplasm. It carries out the reaction Endonucleolytic cleavage to 5'-phosphomonoester.. Functionally, endonuclease that specifically degrades the RNA of RNA-DNA hybrids. The polypeptide is Ribonuclease H (Buchnera aphidicola subsp. Baizongia pistaciae (strain Bp)).